Consider the following 193-residue polypeptide: Xanthine phosphoribosyltransferase (193 aa).

Residues L20 and T27 each coordinate xanthine. Position 128-132 (128-132 (ANGQA)) interacts with 5-phospho-alpha-D-ribose 1-diphosphate. K156 is a xanthine binding site.

Belongs to the purine/pyrimidine phosphoribosyltransferase family. Xpt subfamily. In terms of assembly, homodimer.

Its subcellular location is the cytoplasm. It catalyses the reaction XMP + diphosphate = xanthine + 5-phospho-alpha-D-ribose 1-diphosphate. Its pathway is purine metabolism; XMP biosynthesis via salvage pathway; XMP from xanthine: step 1/1. In terms of biological role, converts the preformed base xanthine, a product of nucleic acid breakdown, to xanthosine 5'-monophosphate (XMP), so it can be reused for RNA or DNA synthesis. The sequence is that of Xanthine phosphoribosyltransferase from Streptococcus agalactiae serotype Ia (strain ATCC 27591 / A909 / CDC SS700).